The sequence spans 344 residues: Exopolyphosphatase 1 (344 aa).

The interval 319 to 344 is disordered; that stretch reads VHTSVRAVGGQPADRNAANRSRGSKP.

It belongs to the GppA/Ppx family. Homodimer.

The catalysed reaction is [phosphate](n) + H2O = [phosphate](n-1) + phosphate + H(+). Functionally, degradation of inorganic polyphosphates (polyP). Releases orthophosphate processively from the ends of the polyP chain. This Mycobacterium bovis (strain ATCC BAA-935 / AF2122/97) protein is Exopolyphosphatase 1.